We begin with the raw amino-acid sequence, 2671 residues long: Stalled ribosome sensor GCN1 (2671 aa).

Alanine 2 carries the post-translational modification N-acetylalanine. HEAT repeat units lie at residues 140–178 (NKLVEVQCLLLLEVLGGSHKHAVDGAVKKLTKLWKENPG), 257–293 (EFKDLILPTIQKSLLRSPENVIETISSLLASVTLDLS), 294–331 (QYALDIVKGLANQLKSNSPRLMDEAVLALRNLARQCSD), 385–423 (CVAELFIPFLQQEVHEGTLVHAVSILALWCNRFTTEVPK), 425–459 (LTDWFKKVFSLKTSTSAVRHAYLQCMLASFRGDTL), 460–500 (LQAL…SKLS), 560–597 (SKVQQYYRVLVAVLLSRTWHVRRQAQQTVRKLLSSLGG), 599–636 (KLANGLLDELKTVLNSHKVLPLEALVTDAGEVTEMGKT), 700–732 (AFITRHLDQIIPRITTQSPLNQSSMNAMGSLSV), and 733–772 (LSPDRVLPQLISTITASVQNPALCLVTREEFSIMQTPAGE). The residue at position 729 (serine 729) is a Phosphoserine. At serine 786 the chain carries Phosphoserine. The stretch at 804–865 (QIIEMELKEE…EAALGLLDAI (62 aa)) forms a coiled coil. 37 HEAT repeats span residues 879–918 (VLVDAFLPLLKSPLAAPRVKGPFLSLAACVMPPRLKTLGT), 979–1016 (SLVFPMLKMVLTEMPYHSEEEEEQMAQILQILTVHAQL), 1035–1072 (LPRVAMLRLLTWVIGTGSPRLQVLASDTLTALCASSSG), 1078–1115 (FAEQEEVDVLLAALQSPCASVRETALRGLMELRLVLPS), 1155–1192 (DLQSDLCSLLIDDVIYHEAAVRQAGAEALSQAVARYQR), 1210–1250 (YRPP…YLDS), 1251–1289 (SQVKPLFQFFVPDALNDRNPDVRKCMLDAALATLNAHGK), 1290–1332 (ENVN…HLDK), 1335–1372 (PKVKPIVAKLIAALSTPSQQVQESVASCLPPLVPAVKE), 1374–1410 (AGGMIQRLMQQLLESDKYAERKGAAYGLAGLVKGLGI), 1413–1451 (LKQQEMMAALTDAIQDKKNFRRREGALFAFEMLCTMLGK), 1455–1492 (PYVVHVLPHLLLCFGDGNQYVREAADDCAKAVMSNLSA), 1493–1530 (HGVKLVLPSLLAALEEESWRTKAGSVELLGAMAYCAPK), 1534–1571 (SCLPNIVPKLTEVLTDSHVKVQKAGQQALRQIGSVIRN), 1573–1609 (EILAIAPVLLDALTDPSRKTQKCLQTLLDTKFVHFID), 1611–1648 (PSLALIMPIVQRAFQDRSTDTRKMAAQIIGNMYSLTDQ), 1653–1690 (PYLPSVTPGLKASLLDPVPEVRTVSAKALGAMVKGMGE), 1692–1729 (CFEDLLPWLMETLTYEQSSVDRSGAAQGLAEVMAGLGV), 1731–1769 (KLEKLMPEIVATASKVDIAPHVRDGYIMMFNYLPITFGD), 1773–1810 (PYVGPIIPCILKALADENEFVRDTALRAGQRVISMYAE), 1812–1848 (AIALLLPQLEQGLFDDLWRIRFSSVQLLGDLLFHISG), 1921–1958 (EILPTLFGLLLGFLASTCADKRTIAARTLGDLVRKLGE), 1959–1996 (KILPEIIPILEEGLRSQKSDERQGVCIGLSEIMKSTSR), 2001–2038 (FFSESLVPTARKALCDPLEEVREAAAKTFEQLHSTIGH), 2039–2074 (QALEDILPFLLKQLDDEEVSEFALDGLKQVMAVKSR), 2076–2108 (VLPYLVPKLTTPPVNTRVLAFLSSVAGDALTRH), 2111–2146 (VILPAVMLALKEKLGTPDEQLEMANCQAVILSVEDD), 2147–2184 (TGHRIIIEDLLEATRSPEVGMRQAAAIILNMYCSRSKA), 2188–2225 (SHLRSLVSGLIRLFNDSSPVVLEESWDALNAITKKLDA), 2259–2296 (RGVTSILPVLREGVLTGSPEQKEEAAKGLGLVIRLTSA), 2301–2338 (PSVVSITGPLIRILGDRFNWTVKAALLETLSLLLGKVG), 2339–2380 (IALK…IHVK), 2382–2417 (DPLFTELLNGIRAVEDPGIRDTMLQALRFVIQGAGS), 2422–2459 (AIRKNLVSLLLSMLGHDEDNTRISTAGCLGELCAFLTD), 2546–2583 (QLPPRLSSLLIKCLQNPCSDIRLVAEKMIWWANKEPRP), 2588–2625 (QTIKPILKALLDNTKDKNTVVRAYSDQAIVNLLKMRRG), and 2627–2661 (ELLQSLSKILDVASLEALNECSRRSLRKLACQADS). Positions 2260–2408 (GVTSILPVLR…GIRDTMLQAL (149 aa)) are RWDBD region. Serine 2276 is subject to Phosphoserine.

This sequence belongs to the GCN1 family. Interacts with EIF2AK4/GCN2; this interaction stimulates the EIF2AK4/GCN2 kinase activity and is impaired by IMPACT upon a variety of stress conditions, such as amino acid depletion, UV-C irradiation, proteasome inhibitor treatment and glucose deprivation. Interacts with IMPACT; this prevents the interaction of GCN1 with EIF2AK4/GCN2 and inhibits EIF2AK4/GCN2 kinase activity. Interacts with RNF14; interaction takes place following ribosome stalling and promotes recruitment of RNF14. Expressed in the hypothalamus, cortex and hippocampus.

Its subcellular location is the cytoplasm. Its function is as follows. Ribosome collision sensor that plays a key role in the RNF14-RNF25 translation quality control pathway, a pathway that takes place when a ribosome has stalled during translation, and which promotes ubiquitination and degradation of translation factors on stalled ribosomes. Directly binds to the ribosome and acts as a sentinel for colliding ribosomes: activated following ribosome stalling and promotes recruitment of RNF14, which directly ubiquitinates EEF1A1/eEF1A, leading to its degradation. In addition to EEF1A1/eEF1A, the RNF14-RNF25 translation quality control pathway mediates degradation of ETF1/eRF1 and ubiquitination of ribosomal protein. GCN1 also acts as a positive activator of the integrated stress response (ISR) by mediating activation of EIF2AK4/GCN2 in response to amino acid starvation. Interaction with EIF2AK4/GCN2 on translating ribosomes stimulates EIF2AK4/GCN2 kinase activity, leading to phosphorylation of eukaryotic translation initiation factor 2 (eIF-2-alpha/EIF2S1). EIF2S1/eIF-2-alpha phosphorylation converts EIF2S1/eIF-2-alpha into a global protein synthesis inhibitor, leading to a global attenuation of cap-dependent translation, and thus to a reduced overall utilization of amino acids, while concomitantly initiating the preferential translation of ISR-specific mRNAs, such as the transcriptional activator ATF4, and hence allowing ATF4-mediated reprogramming of amino acid biosynthetic gene expression to alleviate nutrient depletion. This chain is Stalled ribosome sensor GCN1, found in Mus musculus (Mouse).